Here is a 122-residue protein sequence, read N- to C-terminus: Prefoldin subunit 1 (122 aa).

It belongs to the prefoldin subunit beta family. In terms of assembly, heterohexamer of two PFD-alpha type and four PFD-beta type subunits.

In terms of biological role, binds specifically to cytosolic chaperonin (c-CPN) and transfers target proteins to it. Binds to nascent polypeptide chain and promotes folding in an environment in which there are many competing pathways for nonnative proteins. The sequence is that of Prefoldin subunit 1 (pfdn1) from Tetraodon nigroviridis (Spotted green pufferfish).